A 447-amino-acid polypeptide reads, in one-letter code: tRNA-2-methylthio-N(6)-dimethylallyladenosine synthase (447 aa).

Residues 4-120 form the MTTase N-terminal domain; that stretch reads RSFFIKTYGC…INELLERSRT (117 aa). Residues cysteine 13, cysteine 49, cysteine 83, cysteine 161, cysteine 165, and cysteine 168 each coordinate [4Fe-4S] cluster. One can recognise a Radical SAM core domain in the interval 147-382; sequence HEGEFRKFVT…QARQDEIGLE (236 aa). Positions 385 to 446 constitute a TRAM domain; sequence QEYIGTTQEV…QHSLRGSIVE (62 aa).

Belongs to the methylthiotransferase family. MiaB subfamily. In terms of assembly, monomer. [4Fe-4S] cluster serves as cofactor.

It is found in the cytoplasm. It catalyses the reaction N(6)-dimethylallyladenosine(37) in tRNA + (sulfur carrier)-SH + AH2 + 2 S-adenosyl-L-methionine = 2-methylsulfanyl-N(6)-dimethylallyladenosine(37) in tRNA + (sulfur carrier)-H + 5'-deoxyadenosine + L-methionine + A + S-adenosyl-L-homocysteine + 2 H(+). Functionally, catalyzes the methylthiolation of N6-(dimethylallyl)adenosine (i(6)A), leading to the formation of 2-methylthio-N6-(dimethylallyl)adenosine (ms(2)i(6)A) at position 37 in tRNAs that read codons beginning with uridine. The polypeptide is tRNA-2-methylthio-N(6)-dimethylallyladenosine synthase (Desulfotalea psychrophila (strain LSv54 / DSM 12343)).